We begin with the raw amino-acid sequence, 3401 residues long: Genome polyprotein (3401 aa).

Topologically, residues 1 to 104 (MPVRPRNKPK…GRKKRRSMTH (104 aa)) are cytoplasmic. Residues 101–117 (SMTHGIILSLGVTMVIG) constitute a propeptide, ER anchor for the capsid protein C, removed in mature form by serine protease NS3. The chain crosses the membrane as a helical span at residues 105-125 (GIILSLGVTMVIGASLHHHGG). Over 126–240 (RYLLNVTHAD…GERQIQRIER (115 aa)) the chain is Extracellular. Residues Asn130 and Asn146 are each glycosylated (N-linked (GlcNAc...) asparagine; by host). Residues 241–261 (WMMRNPFYAAISLLLAWWVGS) traverse the membrane as a helical segment. The Cytoplasmic portion of the chain corresponds to 262–266 (DIKQK). A helical membrane pass occupies residues 267 to 281 (VLIAFLVLAIGPAYS). Residues 282–725 (THCVGIPKRD…HTVFGNVFHS (444 aa)) lie on the Extracellular side of the membrane. Disulfide bonds link Cys284–Cys311, Cys355–Cys386, Cys373–Cys397, Cys462–Cys564, and Cys581–Cys611. Positions 379-392 (DRGWGNGCGLFGKG) are fusion peptide. The helical transmembrane segment at 726–746 (IFGGLSWITKIILGGMFLWLG) threads the bilayer. The Extracellular portion of the chain corresponds to 747–753 (VNSRNQT). A helical membrane pass occupies residues 754–774 (MCMVLMAVGGILLFMTLGVSG). Residues 775 to 1122 (EVGCSLDIKR…NVHEEHLVRS (348 aa)) lie on the Extracellular side of the membrane. 6 disulfides stabilise this stretch: Cys778/Cys789, Cys829/Cys916, Cys952/Cys997, Cys1054/Cys1103, Cys1065/Cys1087, and Cys1086/Cys1090. 2 N-linked (GlcNAc...) asparagine; by host glycosylation sites follow: Asn904 and Asn981. Residues 1123 to 1143 (WASAGTGMAESSLGLVALFLF) form a helical membrane-spanning segment. Over 1144–1198 (TDIFARKRMTRKFMVIGCLGVLSVMIVGGFTALDLIRYIIVVGQHFASMNHGGDV) the chain is Cytoplasmic. The helical transmembrane segment at 1199–1219 (AYLAIIAVGKLRPGLLMMYSF) threads the bilayer. Topologically, residues 1220–1287 (KAAWSPKERV…PILALLTPLS (68 aa)) are lumenal. Residues 1288-1308 (MEIIRKTGIFACVGLLGLSLW) form a helical membrane-spanning segment. Over 1309–1352 (RGGDTTMRKGMPLLAGAATAASGLTRASLSVVFILCATAASRRS) the chain is Cytoplasmic. A helical membrane pass occupies residues 1353–1373 (WPIGEIMAIVGIVGTGFGMAV). Topologically, residues 1374 to 1376 (NDQ) are lumenal. A helical transmembrane segment spans residues 1377–1397 (ASLAGPMLVFGLIMIVYATLG). Topologically, residues 1398–1447 (RADGLTLKRVGDITWEEEAVHSGSSTRYDVTLNEAGEFKLVHEEPVVWSH) are cytoplasmic. The tract at residues 1404 to 1443 (LKRVGDITWEEEAVHSGSSTRYDVTLNEAGEFKLVHEEPV) is interacts with and activates NS3 protease. An intramembrane region (helical) is located at residues 1448–1468 (VVFLVVALIAASVHPIALVVV). The Cytoplasmic segment spans residues 1469-2154 (TIIWTYGKKH…ASTNAPEAVT (686 aa)). The region spanning 1481–1661 (GGVLWDIPIA…GGEGVTEEPL (181 aa)) is the Peptidase S7 domain. Active-site charge relay system; for serine protease NS3 activity residues include His1532, Asp1556, and Ser1617. One can recognise a Helicase ATP-binding domain in the interval 1665-1821 (ATMLRKGKLT…ESNGEIEDLR (157 aa)). The important for RNA-binding stretch occupies residues 1669–1672 (RKGK). 1678–1685 (YHPGAGKT) lines the ATP pocket. Positions 1769-1772 (DEAH) match the DEAH box motif. In terms of domain architecture, Helicase C-terminal spans 1816-1995 (EIEDLRRDIP…GMVAPLYDVE (180 aa)). Residues 2155–2175 (ILLMTGIVVACTLGVGLAFMW) traverse the membrane as a helical segment. Residues 2176 to 2181 (PKGVDK) are Lumenal-facing. An intramembrane region (helical) is located at residues 2182–2200 (MSMGMITMSIAGYLMLQGG). A topological domain (lumenal) is located at residue Leu2201. Residues 2202 to 2222 (TPVQVASVLLIFFIFMVVLIP) traverse the membrane as a helical segment. Residues 2223-2235 (EAGTQRSINDNKT) are Cytoplasmic-facing. Residues 2236–2250 (LYVLLGVALLIGAIT) form a helical membrane-spanning segment. Topologically, residues 2251–2285 (ANEMGYLEKTKRDLLGERVQNEWKLELPMFDLRPG) are cytoplasmic. Positions 2286–2306 (AAWSIYVGLATLVMPVLDHWI) form an intramembrane region, helical. The Lumenal portion of the chain corresponds to 2307 to 2354 (RTEYGSLSLTGIAQQASILQAMDKGVPFFKLNMSVIVLLVSVWNNFSM). Residues 2355 to 2375 (LSVLCGVGLLGVHCAFVLPGL) traverse the membrane as a helical segment. Residues 2376–2418 (RAQAAKQAQRRVYHGVAKNPVVDGQTTAEIETAPEMPPLYEKK) are Cytoplasmic-facing. A helical membrane pass occupies residues 2419 to 2439 (LALVLLGVVAIANGVMVRSAF). Over 2440 to 2467 (SMAETVVLLSAAVGPLLEGNTSAIWNGP) the chain is Lumenal. A helical transmembrane segment spans residues 2468 to 2488 (MAVAMAGIMRGNYYAGIGLAY). The Cytoplasmic segment spans residues 2489 to 3401 (NLWILQSPKR…YSVQEVGTVL (913 aa)). In terms of domain architecture, mRNA cap 0-1 NS5-type MT spans 2499–2763 (GRSTTMTLGE…DVVFPTGTRN (265 aa)). Ser2554 provides a ligand contact to S-adenosyl-L-methionine. A Phosphoserine modification is found at Ser2554. Lys2559 (for 2'-O-MTase activity) is an active-site residue. Gly2584, Trp2585, Thr2602, Leu2603, Asp2629, and Val2630 together coordinate S-adenosyl-L-methionine. Asp2644 (for 2'-O-MTase activity) is an active-site residue. Ile2645 provides a ligand contact to S-adenosyl-L-methionine. Catalysis depends on for 2'-O-MTase activity residues Lys2680 and Glu2716. An S-adenosyl-L-methionine-binding site is contributed by Tyr2718. The Nuclear localization signal signature appears at 2869-2902 (RAIMEVVNKWMFDFLAREKAPRICTKEEFINKVR). Positions 2936, 2940, 2945, and 2948 each coordinate Zn(2+). Positions 3026–3178 (GIMYADDTAG…APLDERFGLA (153 aa)) constitute a RdRp catalytic domain. 3 residues coordinate Zn(2+): His3213, Cys3229, and Cys3348.

In the N-terminal section; belongs to the class I-like SAM-binding methyltransferase superfamily. mRNA cap 0-1 NS5-type methyltransferase family. In terms of assembly, homodimer. Interacts (via N-terminus) with host EXOC1 (via C-terminus); this interaction results in EXOC1 degradation through the proteasome degradation pathway. As to quaternary structure, forms heterodimers with envelope protein E in the endoplasmic reticulum and Golgi. Homodimer; in the endoplasmic reticulum and Golgi. Interacts with protein prM. Interacts with non-structural protein 1. In terms of assembly, homodimer; Homohexamer when secreted. Interacts with envelope protein E. NS1 interacts with NS4B. Interacts with host complement protein CFH; this interaction leads to the degradation of C3. As to quaternary structure, interacts (via N-terminus) with serine protease NS3. Forms a heterodimer with serine protease NS3. May form homooligomers. In terms of assembly, forms a heterodimer with NS2B. Interacts with non-structural protein 2A (via N-terminus). Interacts with NS4B. Interacts with unphosphorylated RNA-directed RNA polymerase NS5; this interaction stimulates RNA-directed RNA polymerase NS5 guanylyltransferase activity. NS3 interacts with host PDCD6IP; this interaction contributes to virion release. As to quaternary structure, interacts with serine protease NS3. Homodimer. Interacts with host STAT2; this interaction prevents the establishment of cellular antiviral state. Interacts with serine protease NS3. Interacts with host TRIM23; this interaction leads to NS5 ubiquitination. Post-translationally, specific enzymatic cleavages in vivo yield mature proteins. The nascent capsid protein C contains a C-terminal hydrophobic domain that act as a signal sequence for translocation of prM into the lumen of the ER. Mature capsid protein C is cleaved at a site upstream of this hydrophobic domain by NS3. prM is cleaved in post-Golgi vesicles by a host furin, releasing the mature small envelope protein M, and peptide pr. Non-structural protein 2A-alpha, a C-terminally truncated form of non-structural protein 2A, results from partial cleavage by NS3. Specific enzymatic cleavages in vivo yield mature proteins peptide 2K acts as a signal sequence and is removed from the N-terminus of NS4B by the host signal peptidase in the ER lumen. Signal cleavage at the 2K-4B site requires a prior NS3 protease-mediated cleavage at the 4A-2K site. In terms of processing, cleaved in post-Golgi vesicles by a host furin, releasing the mature small envelope protein M, and peptide pr. This cleavage is incomplete as up to 30% of viral particles still carry uncleaved prM. N-glycosylated. Post-translationally, N-glycosylated. The excreted form is glycosylated and this is required for efficient secretion of the protein from infected cells. In terms of processing, polyubiquitinated; ubiquitination is probably mediated by host TRIM23 and is prerequisite for NS5-STAT2 interaction. NS5 is not ISGylated or sumoylated. Phosphorylated on serines residues. This phosphorylation may trigger NS5 nuclear localization.

The protein localises to the virion. It localises to the host nucleus. Its subcellular location is the host cytoplasm. The protein resides in the host perinuclear region. It is found in the virion membrane. The protein localises to the host endoplasmic reticulum membrane. It localises to the secreted. It carries out the reaction Selective hydrolysis of -Xaa-Xaa-|-Yaa- bonds in which each of the Xaa can be either Arg or Lys and Yaa can be either Ser or Ala.. The catalysed reaction is RNA(n) + a ribonucleoside 5'-triphosphate = RNA(n+1) + diphosphate. It catalyses the reaction a ribonucleoside 5'-triphosphate + H2O = a ribonucleoside 5'-diphosphate + phosphate + H(+). The enzyme catalyses ATP + H2O = ADP + phosphate + H(+). It carries out the reaction a 5'-end (5'-triphosphoguanosine)-ribonucleoside in mRNA + S-adenosyl-L-methionine = a 5'-end (N(7)-methyl 5'-triphosphoguanosine)-ribonucleoside in mRNA + S-adenosyl-L-homocysteine. The catalysed reaction is a 5'-end (N(7)-methyl 5'-triphosphoguanosine)-ribonucleoside in mRNA + S-adenosyl-L-methionine = a 5'-end (N(7)-methyl 5'-triphosphoguanosine)-(2'-O-methyl-ribonucleoside) in mRNA + S-adenosyl-L-homocysteine + H(+). Functionally, plays a role in virus budding by binding to the cell membrane and gathering the viral RNA into a nucleocapsid that forms the core of a mature virus particle. During virus entry, may induce genome penetration into the host cytoplasm after hemifusion induced by the surface proteins. Can migrate to the cell nucleus where it modulates host functions. In terms of biological role, inhibits RNA silencing by interfering with host Dicer. Its function is as follows. Prevents premature fusion activity of envelope proteins in trans-Golgi by binding to envelope protein E at pH6.0. After virion release in extracellular space, gets dissociated from E dimers. Acts as a chaperone for envelope protein E during intracellular virion assembly by masking and inactivating envelope protein E fusion peptide. prM is the only viral peptide matured by host furin in the trans-Golgi network probably to avoid catastrophic activation of the viral fusion activity in acidic Golgi compartment prior to virion release. prM-E cleavage is inefficient, and many virions are only partially matured. These uncleaved prM would play a role in immune evasion. Functionally, may play a role in virus budding. Exerts cytotoxic effects by activating a mitochondrial apoptotic pathway through M ectodomain. May display a viroporin activity. In terms of biological role, binds to host cell surface receptor and mediates fusion between viral and cellular membranes. Envelope protein is synthesized in the endoplasmic reticulum in the form of heterodimer with protein prM. They play a role in virion budding in the ER, and the newly formed immature particle is covered with 60 spikes composed of heterodimer between precursor prM and envelope protein E. The virion is transported to the Golgi apparatus where the low pH causes dissociation of PrM-E heterodimers and formation of E homodimers. prM-E cleavage is inefficient, and many virions are only partially matured. These uncleaved prM would play a role in immune evasion. Its function is as follows. Involved in immune evasion, pathogenesis and viral replication. Once cleaved off the polyprotein, is targeted to three destinations: the viral replication cycle, the plasma membrane and the extracellular compartment. Essential for viral replication. Required for formation of the replication complex and recruitment of other non-structural proteins to the ER-derived membrane structures. Excreted as a hexameric lipoparticle that plays a role against host immune response. Antagonizing the complement function. Binds to the host macrophages and dendritic cells. Inhibits signal transduction originating from Toll-like receptor 3 (TLR3). Component of the viral RNA replication complex that functions in virion assembly and antagonizes the host immune response. Functionally, required cofactor for the serine protease function of NS3. May have membrane-destabilizing activity and form viroporins. In terms of biological role, displays three enzymatic activities: serine protease, NTPase and RNA helicase. NS3 serine protease, in association with NS2B, performs its autocleavage and cleaves the polyprotein at dibasic sites in the cytoplasm: C-prM, NS2A-NS2B, NS2B-NS3, NS3-NS4A, NS4A-2K and NS4B-NS5. NS3 RNA helicase binds RNA and unwinds dsRNA in the 3' to 5' direction. Also plays a role in virus assembly. Its function is as follows. Regulates the ATPase activity of the NS3 helicase activity. NS4A allows NS3 helicase to conserve energy during unwinding. Functions as a signal peptide for NS4B and is required for the interferon antagonism activity of the latter. Functionally, induces the formation of ER-derived membrane vesicles where the viral replication takes place. Inhibits interferon (IFN)-induced host STAT1 phosphorylation and nuclear translocation, thereby preventing the establishment of cellular antiviral state by blocking the IFN-alpha/beta pathway. In terms of biological role, replicates the viral (+) and (-) RNA genome, and performs the capping of genomes in the cytoplasm. NS5 methylates viral RNA cap at guanine N-7 and ribose 2'-O positions. Besides its role in RNA genome replication, also prevents the establishment of cellular antiviral state by blocking the interferon-alpha/beta (IFN-alpha/beta) signaling pathway. IFN-I induces binding of NS5 to host IFN-activated transcription factor STAT2, preventing its transcriptional activity. Host TRIM23 is the E3 ligase that interacts with and polyubiquitinates NS5 to promote its binding to STAT2 and trigger IFN-I signaling inhibition. The protein is Genome polyprotein of Edge Hill virus (EHV).